Consider the following 744-residue polypeptide: Cullin-1 (744 aa).

One can recognise a Cullin neddylation domain in the interval 674–736 (DRRYAIDASI…RDYLERDKDN (63 aa)).

It belongs to the cullin family. As to quaternary structure, part of a SCF (SKP1-CUL1-F-box protein) E3 ubiquitin-protein ligase complex. Is able to form the SCF complex together with SKP1 and the rice black streaked dwarf virus RBSDV protein P7-2. Interacts with D3. Neddylated (rubylated). Deneddylation occurs upon interaction with the COP9 signalosome (CSN) complex. Expressed in dry seeds and coleoptiles.

In terms of biological role, involved in ubiquitination and subsequent proteasomal degradation of target proteins. The protein is Cullin-1 of Oryza sativa subsp. japonica (Rice).